We begin with the raw amino-acid sequence, 410 residues long: Tryptophan synthase beta chain (410 aa).

Lys-104 carries the post-translational modification N6-(pyridoxal phosphate)lysine.

The protein belongs to the TrpB family. Tetramer of two alpha and two beta chains. It depends on pyridoxal 5'-phosphate as a cofactor.

The catalysed reaction is (1S,2R)-1-C-(indol-3-yl)glycerol 3-phosphate + L-serine = D-glyceraldehyde 3-phosphate + L-tryptophan + H2O. It participates in amino-acid biosynthesis; L-tryptophan biosynthesis; L-tryptophan from chorismate: step 5/5. In terms of biological role, the beta subunit is responsible for the synthesis of L-tryptophan from indole and L-serine. The protein is Tryptophan synthase beta chain of Thermosynechococcus vestitus (strain NIES-2133 / IAM M-273 / BP-1).